We begin with the raw amino-acid sequence, 413 residues long: Ribosomal RNA large subunit methyltransferase G (413 aa).

Positions 389 to 413 (EAEVEQAFDTETPHPQSALYGKPKA) are disordered.

This sequence belongs to the methyltransferase superfamily. RlmG family.

It is found in the cytoplasm. The enzyme catalyses guanosine(1835) in 23S rRNA + S-adenosyl-L-methionine = N(2)-methylguanosine(1835) in 23S rRNA + S-adenosyl-L-homocysteine + H(+). Functionally, specifically methylates the guanine in position 1835 (m2G1835) of 23S rRNA. This chain is Ribosomal RNA large subunit methyltransferase G, found in Shewanella pealeana (strain ATCC 700345 / ANG-SQ1).